A 68-amino-acid chain; its full sequence is Large ribosomal subunit protein uL30 (68 aa).

Belongs to the universal ribosomal protein uL30 family. Part of the 50S ribosomal subunit.

This chain is Large ribosomal subunit protein uL30, found in Bartonella tribocorum (strain CIP 105476 / IBS 506).